A 1146-amino-acid chain; its full sequence is MEPSDSTSTAMEEPDSLEVLVKTLDSQTRTFIVGAQMNVKEFKEHIAASVSIPSEKQRLIYQGRVLQDDKKLQDYNVGGKVIHLVERAPPQTQLPSGASSGTGSASATHGGGPLPGTRGPGASGHDRNANSYVMVGTFNLPSDGSAVDVHINMEQAPIQSEPRVRLVMAQHMIRDIQTLLSRMECRGGTQAQASQPPPQTPTVASETVALNSQTSEPVESEAPPREPMESEEMEERPPTQTPELPPSGPAPAGPAPAPETNAPNHPSPAEHVEVLQELQRLQRRLQPFLQRYCEVLGAAATTDYNNNHEGREEDQRLINLVGESLRLLGNTFVALSDLRCNLACAPPRHLHVVRPMSHYTTPMVLQQAAIPIQINVGTTVTMTGNGARPPPAPGAEAASPGSGQASSLPPSSATVDSSTEGAPPPGPAPPPATSHPRVIRISHQSVEPVVMMHMNIQDSGAQPGGVPSAPTGPLGPPGHGQSLGQQVPGFPTAPTRVVIARPTPPQARPSHPGGPPVSGALQGAGLGTNTSLAQMVSGLVGQLLMQPVLVAQGTPGMAPASASAPATAQAQAPAPAPAPAPAPATASASAGTTNTATTAGPAPGGPAQPPPPQPSAADLQFSQLLGNLLGPAGPGAGGPSLASPTITVAVPGVPAFLQGMTEFLQASQAAPPPPPPPPPPPPAPEQQTTPPPGSPSGGTASPGGLGPESLPPEFFTSVVQGVLSSLLGSLGARAGSSESIAAFIQRLSGSSNIFEPGADGALGFFGALLSLLCQNFSMVDVVMLLHGHFQPLQRLQPQLRSFFHQHYLGGQEPTSSNIRMATHTLITGLEEYVRESFSLVQVQPGVDIIRTNLEFLQEQFNSIAAHVLHCTDSGFGARLLELCNQGLFECLALNLHCLGGQQMELAAVINGRIRRMSRGVNPSLVSWLTTMMGLRLQVVLEHMPVGPDAILRYVRRIGDPPQALPEEPMEVQGAERTSPEPQREDASPAPGTTAEEAMSRGPPPAPEGGSRDEQDGASADAEPWAAAVPPEWVPIIQQDIQSQRKVKPQPPLSDAYLSGMPAKRRKTMQGEGPQLLLSEAVSRAAKAAGARPLTSPESLSRDLEAPEVQESYRQQLRSDIQKRLQEDPNYSPQRFPNAHRAFADDP.

An N-acetylmethionine modification is found at Met1. The Ubiquitin-like domain occupies 17–92; that stretch reads LEVLVKTLDS…HLVERAPPQT (76 aa). Disordered stretches follow at residues 87–128, 186–268, 381–436, 457–525, and 555–618; these read RAPP…HDRN, RGGT…HPSP, TMTG…TSHP, QDSG…QGAG, and PGMA…SAAD. At Ser96 the chain carries Phosphoserine. Residues 96-108 are compositionally biased toward low complexity; it reads SGASSGTGSASAT. A compositionally biased stretch (gly residues) spans 109–122; it reads HGGGPLPGTRGPGA. Phosphothreonine is present on Thr117. Polar residues predominate over residues 208 to 217; that stretch reads VALNSQTSEP. 2 consecutive repeat copies span residues 236–265 and 410–438. The segment at 236–650 is 4 X 29 AA approximate repeats; that stretch reads RPPTQTPELP…LASPTITVAV (415 aa). Residues 239–257 are compositionally biased toward pro residues; that stretch reads TQTPELPPSGPAPAGPAPA. The segment covering 394–413 has biased composition (low complexity); that stretch reads GAEAASPGSGQASSLPPSSA. Composition is skewed to pro residues over residues 422–433 and 502–515; these read APPPGPAPPPAT and PTPPQARPSHPGGP. 2 stretches are compositionally biased toward low complexity: residues 555 to 573 and 583 to 601; these read PGMAPASASAPATAQAQAP and PATASASAGTTNTATTAGP. 2 consecutive repeat copies span residues 589 to 616 and 622 to 650. Residues 603–614 are compositionally biased toward pro residues; sequence PGGPAQPPPPQP. 2 disordered regions span residues 666 to 711 and 961 to 1146; these read ASQA…ESLP and PQAL…ADDP. Pro residues predominate over residues 670-694; that stretch reads APPPPPPPPPPPPAPEQQTTPPPGS. Over residues 977–986 the composition is skewed to basic and acidic residues; sequence TSPEPQREDA. Residues Ser978 and Ser987 each carry the phosphoserine modification. The segment covering 1021-1034 has biased composition (low complexity); it reads AEPWAAAVPPEWVP. Positions 1024–1054 are required for interaction with GET4; it reads WAAAVPPEWVPIIQQDIQSQRKVKPQPPLSD. Positions 1026–1068 match the Nuclear localization site motif; the sequence is AAVPPEWVPIIQQDIQSQRKVKPQPPLSDAYLSGMPAKRRKTM. Residues 1036–1146 are sufficient for the delivery of client proteins to the endoplasmic reticulum; the sequence is IQQDIQSQRK…NAHRAFADDP (111 aa). Residue Thr1067 is modified to Phosphothreonine. The BAG-similar domain, required and sufficient for interaction with UBL4A stretch occupies residues 1072-1129; that stretch reads GPQLLLSEAVSRAAKAAGARPLTSPESLSRDLEAPEVQESYRQQLRSDIQKRLQEDPN. The segment covering 1080–1090 has biased composition (low complexity); it reads AVSRAAKAAGA. Residues Ser1095 and Ser1131 each carry the phosphoserine modification.

Component of the BAG6/BAT3 complex, also named BAT3 complex, at least composed of BAG6, UBL4A and GET4/TRC35. Interacts with GET4; the interaction is direct and localizes BAG6 in the cytosol. Interacts with UBL4A; the interaction is direct and required for UBL4A protein stability. Interacts with AIFM1. Interacts with HSPA2. Interacts with CTCFL. Interacts with p300/EP300. Interacts (via ubiquitin-like domain) with RNF126; required for BAG6-dependent ubiquitination of proteins mislocalized to the cytosol. Interacts (via ubiquitin-like domain) with SGTA; SGTA competes with RNF126 by binding the same region of BAG6, thereby promoting deubiquitination of BAG6-target proteins and rescuing them from degradation. Interacts with ricin A chain. Interacts with VCP and AMFR; both form the VCP/p97-AMFR/gp78 complex. Interacts with SYVN1. Interacts with USP13; the interaction is direct and may mediate UBL4A deubiquitination. Interacts with ZFAND2B. Interacts with KPNA2. Interacts with UBQLN4. Ricin can induce a cleavage by the caspase CASP3. The released C-terminal peptide induces apoptosis.

It localises to the cytoplasm. The protein resides in the cytosol. It is found in the nucleus. Its subcellular location is the secreted. The protein localises to the extracellular exosome. In terms of biological role, ATP-independent molecular chaperone preventing the aggregation of misfolded and hydrophobic patches-containing proteins. Functions as part of a cytosolic protein quality control complex, the BAG6/BAT3 complex, which maintains these client proteins in a soluble state and participates in their proper delivery to the endoplasmic reticulum or alternatively can promote their sorting to the proteasome where they undergo degradation. The BAG6/BAT3 complex is involved in the post-translational delivery of tail-anchored/type II transmembrane proteins to the endoplasmic reticulum membrane. Recruited to ribosomes, it interacts with the transmembrane region of newly synthesized tail-anchored proteins and together with SGTA and ASNA1 mediates their delivery to the endoplasmic reticulum. Client proteins that cannot be properly delivered to the endoplasmic reticulum are ubiquitinated by RNF126, an E3 ubiquitin-protein ligase associated with BAG6 and are sorted to the proteasome. SGTA which prevents the recruitment of RNF126 to BAG6 may negatively regulate the ubiquitination and the proteasomal degradation of client proteins. Similarly, the BAG6/BAT3 complex also functions as a sorting platform for proteins of the secretory pathway that are mislocalized to the cytosol either delivering them to the proteasome for degradation or to the endoplasmic reticulum. The BAG6/BAT3 complex also plays a role in the endoplasmic reticulum-associated degradation (ERAD), a quality control mechanism that eliminates unwanted proteins of the endoplasmic reticulum through their retrotranslocation to the cytosol and their targeting to the proteasome. It maintains these retrotranslocated proteins in an unfolded yet soluble state condition in the cytosol to ensure their proper delivery to the proteasome. BAG6 is also required for selective ubiquitin-mediated degradation of defective nascent chain polypeptides by the proteasome. In this context, it may participate in the production of antigenic peptides and play a role in antigen presentation in immune response. BAG6 is also involved in endoplasmic reticulum stress-induced pre-emptive quality control, a mechanism that selectively attenuates the translocation of newly synthesized proteins into the endoplasmic reticulum and reroutes them to the cytosol for proteasomal degradation. BAG6 may ensure the proper degradation of these proteins and thereby protects the endoplasmic reticulum from protein overload upon stress. By inhibiting the polyubiquitination and subsequent proteasomal degradation of HSPA2 it may also play a role in the assembly of the synaptonemal complex during spermatogenesis. Also positively regulates apoptosis by interacting with and stabilizing the proapoptotic factor AIFM1. By controlling the steady-state expression of the IGF1R receptor, indirectly regulates the insulin-like growth factor receptor signaling pathway. Its function is as follows. Involved in DNA damage-induced apoptosis: following DNA damage, accumulates in the nucleus and forms a complex with p300/EP300, enhancing p300/EP300-mediated p53/TP53 acetylation leading to increase p53/TP53 transcriptional activity. When nuclear, may also act as a component of some chromatin regulator complex that regulates histone 3 'Lys-4' dimethylation (H3K4me2). Released extracellularly via exosomes, it is a ligand of the natural killer/NK cells receptor NCR3 and stimulates NK cells cytotoxicity. It may thereby trigger NK cells cytotoxicity against neighboring tumor cells and immature myeloid dendritic cells (DC). Functionally, may mediate ricin-induced apoptosis. This chain is Large proline-rich protein BAG6, found in Rattus norvegicus (Rat).